The following is a 357-amino-acid chain: Histidinol-phosphate aminotransferase 1 (357 aa).

Lys210 carries the post-translational modification N6-(pyridoxal phosphate)lysine.

This sequence belongs to the class-II pyridoxal-phosphate-dependent aminotransferase family. Histidinol-phosphate aminotransferase subfamily. As to quaternary structure, homodimer. Pyridoxal 5'-phosphate is required as a cofactor.

The catalysed reaction is L-histidinol phosphate + 2-oxoglutarate = 3-(imidazol-4-yl)-2-oxopropyl phosphate + L-glutamate. It participates in amino-acid biosynthesis; L-histidine biosynthesis; L-histidine from 5-phospho-alpha-D-ribose 1-diphosphate: step 7/9. In Methylococcus capsulatus (strain ATCC 33009 / NCIMB 11132 / Bath), this protein is Histidinol-phosphate aminotransferase 1.